We begin with the raw amino-acid sequence, 469 residues long: Neuraminidase (469 aa).

Over Met-1 to Thr-12 the chain is Intravirion. An involved in apical transport and lipid raft association region spans residues Gly-11–Trp-33. A helical membrane pass occupies residues Ile-13 to Trp-33. The Virion surface portion of the chain corresponds to Met-34–Lys-469. The hypervariable stalk region stretch occupies residues His-36 to Ser-90. 5 N-linked (GlcNAc...) asparagine; by host glycosylation sites follow: Asn-50, Asn-58, Asn-63, Asn-68, and Asn-88. Residues Leu-91–Lys-469 form a head of neuraminidase region. 8 disulfide bridges follow: Cys-92–Cys-417, Cys-124–Cys-129, Cys-184–Cys-231, Cys-233–Cys-238, Cys-279–Cys-292, Cys-281–Cys-290, Cys-318–Cys-335, and Cys-421–Cys-446. Residue Arg-118 participates in substrate binding. A glycan (N-linked (GlcNAc...) asparagine; by host) is linked at Asn-146. Asp-151 functions as the Proton donor/acceptor in the catalytic mechanism. Arg-152 contributes to the substrate binding site. Asn-235 is a glycosylation site (N-linked (GlcNAc...) asparagine; by host). Glu-277–Glu-278 serves as a coordination point for substrate. Arg-293 provides a ligand contact to substrate. The Ca(2+) site is built by Asp-294, Asp-324, and Asn-344. Arg-368 is a binding site for substrate. The Nucleophile role is filled by Tyr-402.

This sequence belongs to the glycosyl hydrolase 34 family. In terms of assembly, homotetramer. Requires Ca(2+) as cofactor. In terms of processing, N-glycosylated.

The protein localises to the virion membrane. Its subcellular location is the host apical cell membrane. The catalysed reaction is Hydrolysis of alpha-(2-&gt;3)-, alpha-(2-&gt;6)-, alpha-(2-&gt;8)- glycosidic linkages of terminal sialic acid residues in oligosaccharides, glycoproteins, glycolipids, colominic acid and synthetic substrates.. Inhibited by the neuraminidase inhibitors zanamivir (Relenza) and oseltamivir (Tamiflu). These drugs interfere with the release of progeny virus from infected cells and are effective against all influenza strains. Resistance to neuraminidase inhibitors is quite rare. Its function is as follows. Catalyzes the removal of terminal sialic acid residues from viral and cellular glycoconjugates. Cleaves off the terminal sialic acids on the glycosylated HA during virus budding to facilitate virus release. Additionally helps virus spread through the circulation by further removing sialic acids from the cell surface. These cleavages prevent self-aggregation and ensure the efficient spread of the progeny virus from cell to cell. Otherwise, infection would be limited to one round of replication. Described as a receptor-destroying enzyme because it cleaves a terminal sialic acid from the cellular receptors. May facilitate viral invasion of the upper airways by cleaving the sialic acid moieties on the mucin of the airway epithelial cells. Likely to plays a role in the budding process through its association with lipid rafts during intracellular transport. May additionally display a raft-association independent effect on budding. Plays a role in the determination of host range restriction on replication and virulence. Sialidase activity in late endosome/lysosome traffic seems to enhance virus replication. In Influenza A virus (strain A/New Jersey/8/1976 H1N1), this protein is Neuraminidase.